The chain runs to 123 residues: Ribonuclease P protein component (123 aa).

It belongs to the RnpA family. Consists of a catalytic RNA component (M1 or rnpB) and a protein subunit.

It carries out the reaction Endonucleolytic cleavage of RNA, removing 5'-extranucleotides from tRNA precursor.. RNaseP catalyzes the removal of the 5'-leader sequence from pre-tRNA to produce the mature 5'-terminus. It can also cleave other RNA substrates such as 4.5S RNA. The protein component plays an auxiliary but essential role in vivo by binding to the 5'-leader sequence and broadening the substrate specificity of the ribozyme. The sequence is that of Ribonuclease P protein component from Streptococcus pneumoniae (strain Hungary19A-6).